The primary structure comprises 470 residues: 3-isopropylmalate dehydratase large subunit (470 aa).

[4Fe-4S] cluster is bound by residues Cys-346, Cys-406, and Cys-409.

This sequence belongs to the aconitase/IPM isomerase family. LeuC type 1 subfamily. In terms of assembly, heterodimer of LeuC and LeuD. The cofactor is [4Fe-4S] cluster.

It carries out the reaction (2R,3S)-3-isopropylmalate = (2S)-2-isopropylmalate. Its pathway is amino-acid biosynthesis; L-leucine biosynthesis; L-leucine from 3-methyl-2-oxobutanoate: step 2/4. Catalyzes the isomerization between 2-isopropylmalate and 3-isopropylmalate, via the formation of 2-isopropylmaleate. In Shouchella clausii (strain KSM-K16) (Alkalihalobacillus clausii), this protein is 3-isopropylmalate dehydratase large subunit.